The chain runs to 267 residues: Translation initiation factor 2 subunit alpha (267 aa).

The S1 motif domain occupies 17–88; it reads GEIVIGTVKR…KRGHIDLSIK (72 aa).

It belongs to the eIF-2-alpha family. Heterotrimer composed of an alpha, a beta and a gamma chain.

Its function is as follows. eIF-2 functions in the early steps of protein synthesis by forming a ternary complex with GTP and initiator tRNA. In Archaeoglobus fulgidus (strain ATCC 49558 / DSM 4304 / JCM 9628 / NBRC 100126 / VC-16), this protein is Translation initiation factor 2 subunit alpha (eif2a).